The primary structure comprises 652 residues: DNA ligase (652 aa).

NAD(+)-binding positions include aspartate 29–aspartate 33, serine 78–leucine 79, and glutamate 107. The active-site N6-AMP-lysine intermediate is the lysine 109. 4 residues coordinate NAD(+): arginine 130, glutamate 164, lysine 278, and lysine 302. Residues cysteine 395, cysteine 398, cysteine 413, and cysteine 418 each coordinate Zn(2+). In terms of domain architecture, BRCT spans asparagine 577–leucine 652.

This sequence belongs to the NAD-dependent DNA ligase family. LigA subfamily. It depends on Mg(2+) as a cofactor. The cofactor is Mn(2+).

It catalyses the reaction NAD(+) + (deoxyribonucleotide)n-3'-hydroxyl + 5'-phospho-(deoxyribonucleotide)m = (deoxyribonucleotide)n+m + AMP + beta-nicotinamide D-nucleotide.. Functionally, DNA ligase that catalyzes the formation of phosphodiester linkages between 5'-phosphoryl and 3'-hydroxyl groups in double-stranded DNA using NAD as a coenzyme and as the energy source for the reaction. It is essential for DNA replication and repair of damaged DNA. In Streptococcus pyogenes serotype M1, this protein is DNA ligase.